A 171-amino-acid polypeptide reads, in one-letter code: UPF0763 protein Hac_0849 (171 aa).

This sequence belongs to the UPF0763 family.

This Helicobacter acinonychis (strain Sheeba) protein is UPF0763 protein Hac_0849.